Here is a 523-residue protein sequence, read N- to C-terminus: GMP synthase [glutamine-hydrolyzing] (523 aa).

The 198-residue stretch at Lys8–Asn205 folds into the Glutamine amidotransferase type-1 domain. The active-site Nucleophile is Cys85. Residues His179 and Glu181 contribute to the active site. Positions Trp206–Arg398 constitute a GMPS ATP-PPase domain. Ser233–Ser239 provides a ligand contact to ATP.

In terms of assembly, homodimer.

It catalyses the reaction XMP + L-glutamine + ATP + H2O = GMP + L-glutamate + AMP + diphosphate + 2 H(+). It participates in purine metabolism; GMP biosynthesis; GMP from XMP (L-Gln route): step 1/1. In terms of biological role, catalyzes the synthesis of GMP from XMP. This is GMP synthase [glutamine-hydrolyzing] from Histophilus somni (strain 2336) (Haemophilus somnus).